A 167-amino-acid chain; its full sequence is Endoribonuclease YbeY (167 aa).

Positions 131, 135, and 141 each coordinate Zn(2+).

It belongs to the endoribonuclease YbeY family. The cofactor is Zn(2+).

It is found in the cytoplasm. Functionally, single strand-specific metallo-endoribonuclease involved in late-stage 70S ribosome quality control and in maturation of the 3' terminus of the 16S rRNA. The chain is Endoribonuclease YbeY from Rickettsia africae (strain ESF-5).